The primary structure comprises 750 residues: Penicillin-binding protein 2x (750 aa).

Residues 29-49 (LSLLSVFVFAIFLVNFAVIIG) form a helical membrane-spanning segment. Residue S337 is the Acyl-ester intermediate of the active site. PASTA domains follow at residues 632 to 691 (QQSP…ILSD) and 692 to 750 (KAEE…TLGD).

The protein belongs to the transpeptidase family.

It is found in the cell membrane. Functionally, a transpeptidase that forms peptide cross-links between adjacent glycan strands in cell wall peptidoglycan (PG). Part of the divisome machinery that synthesizes the septal cross wall. Beta-lactams inactivate the PBPs by acylating an essential serine residue in the active site of these proteins. The sequence is that of Penicillin-binding protein 2x (pbpX) from Streptococcus pneumoniae serotype 4 (strain ATCC BAA-334 / TIGR4).